A 622-amino-acid polypeptide reads, in one-letter code: Glutamyl-tRNA(Gln) amidotransferase subunit E (622 aa).

The protein belongs to the GatB/GatE family. GatE subfamily. As to quaternary structure, heterodimer of GatD and GatE.

It catalyses the reaction L-glutamyl-tRNA(Gln) + L-glutamine + ATP + H2O = L-glutaminyl-tRNA(Gln) + L-glutamate + ADP + phosphate + H(+). Functionally, allows the formation of correctly charged Gln-tRNA(Gln) through the transamidation of misacylated Glu-tRNA(Gln) in organisms which lack glutaminyl-tRNA synthetase. The reaction takes place in the presence of glutamine and ATP through an activated gamma-phospho-Glu-tRNA(Gln). The GatDE system is specific for glutamate and does not act on aspartate. This Halobacterium salinarum (strain ATCC 29341 / DSM 671 / R1) protein is Glutamyl-tRNA(Gln) amidotransferase subunit E.